Here is a 161-residue protein sequence, read N- to C-terminus: MPSFDIVSKVDMQEVDNAVNQAVKEIAQRYDFKGSKSEVTLEKDAIKVLTEDDFRLKAIIDILQSKFIKRGISAKALQYGKVENASGSMVRQVIDVQQGVSKEKGKEINNVIKETKLKVQSQIQDDQVRVTGKNIDDLQQVIQLLKGKDLGLDLQFVNFRQ.

The protein belongs to the YajQ family.

Its function is as follows. Nucleotide-binding protein. The protein is Nucleotide-binding protein Geob_0921 of Geotalea daltonii (strain DSM 22248 / JCM 15807 / FRC-32) (Geobacter daltonii).